The sequence spans 859 residues: Probable potassium transporter 14 (859 aa).

Positions 1–19 (METRSGGSGSASGGGGGGR) are enriched in gly residues. A disordered region spans residues 1–69 (METRSGGSGS…SRGGCSDSDD (69 aa)). The Cytoplasmic segment spans residues 1-112 (METRSGGSGS…RHQEITVGRS (112 aa)). Residues 54 to 65 (PAAASGSRGGCS) are compositionally biased toward low complexity. The chain crosses the membrane as a helical span at residues 113–133 (IVLAVQTLGVVFGDVGTSPLY). The Extracellular segment spans residues 134–155 (AFDVMFNKYPITSKEDVLGALS). A helical membrane pass occupies residues 156–176 (LVIYTLILIPLLKYTLIALWG). Residues 177 to 240 (NDDGEGGTFA…RLETSSMLKK (64 aa)) are Cytoplasmic-facing. The helical transmembrane segment at 241 to 261 (LLLMLVLFGTSMVIADGVVTP) threads the bilayer. Over 262 to 275 (AMSVMSAVNGLKVG) the chain is Extracellular. Residues 276-296 (ISSVNEGEVVMITVAVLIVLF) traverse the membrane as a helical segment. At 297–305 (TLQRFGSSK) the chain is on the cytoplasmic side. Residues 306–326 (VALAVGPALFIWFCCLAGIGI) form a helical membrane-spanning segment. The Extracellular segment spans residues 327-359 (YNMKTYGSAVLQAFNPMYIYYYFERNPTQAWMS). A helical membrane pass occupies residues 360–380 (LGGCLLCATGSEAMFADLCYF). The Cytoplasmic portion of the chain corresponds to 381–388 (SVKSVQLT). The helical transmembrane segment at 389–409 (FVFLVLPCLLLGYLGQAAFLM) threads the bilayer. The Extracellular segment spans residues 410 to 417 (ENLTENQQ). Residue asparagine 411 is glycosylated (N-linked (GlcNAc...) asparagine). Residues 418-438 (VFFLSIPNQAFWPVVFIAILA) traverse the membrane as a helical segment. The Cytoplasmic portion of the chain corresponds to 439–478 (AIIASRTMTTAIFSTIKQATALGCFPRLKIIHTSRSFMGQ). The chain crosses the membrane as a helical span at residues 479–499 (IYIPMMNWFLLVSCLAFVTMF). Residues 500-508 (GSINEIGNA) are Extracellular-facing. Residues 509–531 (YGIAELGVMMMTTVLVTIIMLLI) form a helical membrane-spanning segment. At 532–535 (WQIN) the chain is on the cytoplasmic side. The helical transmembrane segment at 536 to 558 (IIVVLCFLTLSLGLELIFFSSVL) threads the bilayer. Residues 559-560 (GS) lie on the Extracellular side of the membrane. Residues 561–581 (VADGSWVLLVFAAVLYLIMYI) form a helical membrane-spanning segment. Residues 582–859 (WNYGTKLKYE…MMQVAMQYMV (278 aa)) lie on the Cytoplasmic side of the membrane. The tract at residues 752–772 (GVPPAEAAGTTEHPTIGSSMS) is disordered. The segment covering 763-772 (EHPTIGSSMS) has biased composition (polar residues).

The protein belongs to the HAK/KUP transporter (TC 2.A.72.3) family.

The protein resides in the membrane. Functionally, high-affinity potassium transporter. This Oryza sativa subsp. japonica (Rice) protein is Probable potassium transporter 14 (HAK14).